We begin with the raw amino-acid sequence, 166 residues long: Minor capsid protein VP2 (166 aa).

The interval 138 to 166 is disordered; the sequence is PAPSGFVNPNYQPSPPRLKLGPRPPSTNV. Residues 149–166 show a composition bias toward pro residues; it reads QPSPPRLKLGPRPPSTNV.

Belongs to the vesivirus VP2 protein family. In terms of assembly, homooligomer. The portal-like structure consists in 12 copies of VP2. Interacts with capsid protein VP1.

The protein localises to the virion. It is found in the host cytoplasm. In terms of biological role, minor structural protein that forms a portal-like structure at a unique three-fold axis of symmetry, following binding to the host receptor. The channel formed by VP2 may allow the delivery of the viral genome through the host endosomal membrane. The protein is Minor capsid protein VP2 of Homo sapiens (Human).